The following is an 85-amino-acid chain: Putative transmembrane protein ORF28 (85 aa).

The next 2 helical transmembrane spans lie at 32–52 (IMLL…VQIV) and 59–79 (LLSV…MLGI).

Its subcellular location is the host membrane. The sequence is that of Putative transmembrane protein ORF28 from Haloarcula hispanica (His1V).